A 283-amino-acid chain; its full sequence is Glutamate racemase (283 aa).

Residues 28-29 (DS) and 60-61 (YG) contribute to the substrate site. The active-site Proton donor/acceptor is the Cys-92. Position 93-94 (93-94 (NT)) interacts with substrate. Catalysis depends on Cys-204, which acts as the Proton donor/acceptor. 205-206 (TH) provides a ligand contact to substrate.

This sequence belongs to the aspartate/glutamate racemases family.

The enzyme catalyses L-glutamate = D-glutamate. It functions in the pathway cell wall biogenesis; peptidoglycan biosynthesis. Provides the (R)-glutamate required for cell wall biosynthesis. The chain is Glutamate racemase from Salmonella choleraesuis (strain SC-B67).